The following is a 183-amino-acid chain: Guanylate kinase (183 aa).

A Guanylate kinase-like domain is found at 4–182 (GRVVVLTGPS…AITALEAAIF (179 aa)). 11–18 (GPSGVGKG) serves as a coordination point for ATP.

It belongs to the guanylate kinase family.

Its subcellular location is the cytoplasm. The enzyme catalyses GMP + ATP = GDP + ADP. The catalysed reaction is dZMP + ATP = dZDP + ADP. The protein operates within purine metabolism. Functionally, essential for recycling GMP and indirectly, cGMP. In terms of biological role, (Microbial infection) Catalyzes the phosphorylation of dZMP to dZDP, when the bacterium is infected by a phage that produces the substrate for the synthesis of dZTP (2- amino-2'-deoxyadenosine 5'-triphosphate), which is then used by the phage as a DNA polymerase substrate. The protein is Guanylate kinase of Synechococcus elongatus (strain ATCC 33912 / PCC 7942 / FACHB-805) (Anacystis nidulans R2).